The sequence spans 182 residues: Large ribosomal subunit protein uL16 (182 aa).

This sequence belongs to the universal ribosomal protein uL16 family.

The protein is Large ribosomal subunit protein uL16 of Thermococcus onnurineus (strain NA1).